The chain runs to 892 residues: Translation initiation factor IF-2 (892 aa).

2 stretches are compositionally biased toward basic and acidic residues: residues 93–159 (VKRD…KDKV) and 166–216 (DMTK…EENK). The interval 93 to 304 (VKRDPQEAER…SSLQQGFQKP (212 aa)) is disordered. Positions 254 to 269 (GRGRNAKAARPAKKGK) are enriched in basic residues. Positions 270 to 282 (HAESKADREEARA) are enriched in basic and acidic residues. The tr-type G domain occupies 391–560 (PRAPVVTIMG…LLQAEVLELK (170 aa)). A G1 region spans residues 400-407 (GHVDHGKT). A GTP-binding site is contributed by 400-407 (GHVDHGKT). Positions 425-429 (GITQH) are G2. Residues 446-449 (DTPG) form a G3 region. Residues 446-450 (DTPGH) and 500-503 (NKID) contribute to the GTP site. Residues 500 to 503 (NKID) are G4. A G5 region spans residues 536–538 (SAK).

Belongs to the TRAFAC class translation factor GTPase superfamily. Classic translation factor GTPase family. IF-2 subfamily.

The protein localises to the cytoplasm. In terms of biological role, one of the essential components for the initiation of protein synthesis. Protects formylmethionyl-tRNA from spontaneous hydrolysis and promotes its binding to the 30S ribosomal subunits. Also involved in the hydrolysis of GTP during the formation of the 70S ribosomal complex. The sequence is that of Translation initiation factor IF-2 from Salmonella gallinarum (strain 287/91 / NCTC 13346).